The primary structure comprises 146 residues: Hemoglobin subunit beta-2 (146 aa).

The Globin domain occupies 2–146 (EWTNFERATI…VVSSLGKQYH (145 aa)). Positions 63 and 92 each coordinate heme b.

Belongs to the globin family. Hb2 is a heterotetramer of two alpha chains and two beta-2 chains. In terms of tissue distribution, red blood cells.

In terms of biological role, involved in oxygen transport from gills to the various peripheral tissues. The sequence is that of Hemoglobin subunit beta-2 (hbb2) from Cygnodraco mawsoni (Antarctic dragonfish).